The following is a 432-amino-acid chain: 23S rRNA (uracil(1939)-C(5))-methyltransferase RlmD (432 aa).

The 59-residue stretch at 10-68 (RVTTREIITVTTDGLDAFGQGVARHHGKALFIAGLLPGERAEVVLSEDKKQFARGDVKK) folds into the TRAM domain. Residues cysteine 81, cysteine 87, cysteine 90, and cysteine 162 each contribute to the [4Fe-4S] cluster site. Residues glutamine 265, phenylalanine 294, asparagine 299, glutamate 315, asparagine 342, and aspartate 363 each coordinate S-adenosyl-L-methionine. The Nucleophile role is filled by cysteine 389.

It belongs to the class I-like SAM-binding methyltransferase superfamily. RNA M5U methyltransferase family. RlmD subfamily.

It catalyses the reaction uridine(1939) in 23S rRNA + S-adenosyl-L-methionine = 5-methyluridine(1939) in 23S rRNA + S-adenosyl-L-homocysteine + H(+). Catalyzes the formation of 5-methyl-uridine at position 1939 (m5U1939) in 23S rRNA. This chain is 23S rRNA (uracil(1939)-C(5))-methyltransferase RlmD, found in Cronobacter sakazakii (strain ATCC BAA-894) (Enterobacter sakazakii).